We begin with the raw amino-acid sequence, 688 residues long: MAKNFLIELGTEELPPKALRSLAEAFAANFEAGLKAAGLAHQGIKWYATPRRLALKIAELDEGQADKIVEKRGPAIASAFDADGNPTKAAQGWARGNGITVEQAERLKTDKGEWLLHKEEVKGQPVKGLVVELAAKALAGLPIPKAMRWGNSDIQFIRPVKTLTILLGDELIEGTILGVASTRTIRGHRFMGESEFTIDSADQYPAILEERGKVMADYDARKAIILAGAKKAAEAVGGIADLEDELVEEVTSLVEWPVVLTAKFEQEFLNVPSEALVYTMKGDQKYFPVYDQEKNLLPNFIFVTNIESKEPRHIIEGNEKVVRPRLADAEFFFNTDRKRPLIDRLPELEQAIFQKQLGTIKDKTDRITELAGYIAEQIGADVEKSQRAGLLAKCDLMTSMVFEFTDTQGVMGMHYATHDGEDAQVALALYEQYMPRFAGDDLPSTDVSASVAMADKLDTLVGIFGIGQAPKGSDPFALRRAALGILRIIVEKGYNLDLVDLVAKAQSLFGDKLTNANVDTDVIDFMLGRFRAWYQDEGFSVDIIQAVLARRPTKPADFDQRVKAVSHFRELDAAESLAAANKRVGNILAKFDGELAQEIDLALLQEDAEKVLAEKVEILAEALEPVFIAGNYQEALSRLAELREPVDAFFDGVMVMADDEALKLNRLTLLNKLRNLFLDIADISLLQK.

This sequence belongs to the class-II aminoacyl-tRNA synthetase family. Tetramer of two alpha and two beta subunits.

The protein localises to the cytoplasm. It catalyses the reaction tRNA(Gly) + glycine + ATP = glycyl-tRNA(Gly) + AMP + diphosphate. The chain is Glycine--tRNA ligase beta subunit from Aliivibrio salmonicida (strain LFI1238) (Vibrio salmonicida (strain LFI1238)).